The primary structure comprises 414 residues: MVSTISRHDQNKNNDYLNQPSKEGRFGKYGGQYVPETLMPALFELEKAASDAWKDKQFVDELNHLLKTYVGRETPLYEAKRLTEHYQTKTCTSRIWLKREDLNHTGAHKINNALGQALLAIRMGKERIIAETGAGQHGVATATVCARFGLKCIIYMGAEDIKRQSLNVFRMKLLGAEVKVVTSGTATLKDATSEAIRDWVSNVETTHYILGSVAGPHPFPMIVRDFHAVIGEEAKKQCVESFGSLPDILLACVGGGSNAMGLFHPFVKEKSVRLIGVEAAGSGVNTDKHAATITKGSVGILHGSMSLLLQDKNGQVQEAHSISAGLDYPGVGPEHSYLKDIGRAEYGSVTDTEALNALKLVSELEGIIPALETAHAFAWLEKLCPTLEKNTEIVINCSGRGDKDVNTVASSLDI.

The segment covering 1–12 has biased composition (basic and acidic residues); sequence MVSTISRHDQNK. Residues 1–23 form a disordered region; that stretch reads MVSTISRHDQNKNNDYLNQPSKE. Lysine 109 carries the post-translational modification N6-(pyridoxal phosphate)lysine.

The protein belongs to the TrpB family. As to quaternary structure, tetramer of two alpha and two beta chains. Pyridoxal 5'-phosphate serves as cofactor.

The catalysed reaction is (1S,2R)-1-C-(indol-3-yl)glycerol 3-phosphate + L-serine = D-glyceraldehyde 3-phosphate + L-tryptophan + H2O. The protein operates within amino-acid biosynthesis; L-tryptophan biosynthesis; L-tryptophan from chorismate: step 5/5. Its function is as follows. The beta subunit is responsible for the synthesis of L-tryptophan from indole and L-serine. The sequence is that of Tryptophan synthase beta chain from Prochlorococcus marinus (strain MIT 9515).